The primary structure comprises 121 residues: MSHLTDLPPWAALLVCGLMLVGAATTLIGSLGLLRLPDFYARLHAPTIATSGGTILLCLASILCFAVLQSRWVFHEVLIIFFVTVTTPVTLMLLGQATLYRDRFEEQQGVPRKQKPAPGEE.

A run of 3 helical transmembrane segments spans residues 10–32, 45–67, and 72–94; these read WAALLVCGLMLVGAATTLIGSLG, APTIATSGGTILLCLASILCFAV, and WVFHEVLIIFFVTVTTPVTLMLL.

This sequence belongs to the CPA3 antiporters (TC 2.A.63) subunit G family. May form a hetero-oligomeric complex that consists of six subunits: PhaAB, PhaC, PhaD, PhaE, PhaF and PhaG.

It is found in the cell membrane. In terms of biological role, part of a K(+) efflux system which is required for the adaptation of R.meliloti to alkaline pH as well as for the infection process during symbiotic nodule development. This is Probable K(+)/H(+) antiporter subunit G (phaG) from Rhizobium meliloti (strain 1021) (Ensifer meliloti).